A 1573-amino-acid chain; its full sequence is Pentafunctional AROM polypeptide 1 (1573 aa).

The interval Met1–Asn380 is 3-dehydroquinate synthase. Residues Asp44–Asn46, Glu81–Lys84, Gly112–Val114, and Asp117 contribute to the NAD(+) site. Arg128 contributes to the 7-phospho-2-dehydro-3-deoxy-D-arabino-heptonate binding site. Thr137 to Thr138 is a binding site for NAD(+). Positions 144 and 150 each coordinate 7-phospho-2-dehydro-3-deoxy-D-arabino-heptonate. Residue Lys159 participates in NAD(+) binding. Position 160 (Asn160) interacts with 7-phospho-2-dehydro-3-deoxy-D-arabino-heptonate. NAD(+)-binding positions include Phe177–Thr180 and Asn188. Glu192 serves as a coordination point for Zn(2+). 7-phospho-2-dehydro-3-deoxy-D-arabino-heptonate-binding positions include Glu192–Lys195 and Lys246. Glu256 acts as the Proton acceptor; for 3-dehydroquinate synthase activity in catalysis. 7-phospho-2-dehydro-3-deoxy-D-arabino-heptonate contacts are provided by residues Arg260 to Asn264 and His267. His267 is a Zn(2+) binding site. The Proton acceptor; for 3-dehydroquinate synthase activity role is filled by His271. 7-phospho-2-dehydro-3-deoxy-D-arabino-heptonate-binding residues include His283 and Lys352. His283 is a Zn(2+) binding site. The interval Val393–Val838 is EPSP synthase. The active-site For EPSP synthase activity is the Cys820. Positions Asp859–Ser1051 are shikimate kinase. ATP is bound at residue Gly866 to Thr873. Positions Leu1052–Glu1273 are 3-dehydroquinase. His1175 functions as the Proton acceptor; for 3-dehydroquinate dehydratase activity in the catalytic mechanism. The active-site Schiff-base intermediate with substrate; for 3-dehydroquinate dehydratase activity is Lys1203. The interval Ala1286 to Lys1573 is shikimate dehydrogenase.

The protein in the N-terminal section; belongs to the sugar phosphate cyclases superfamily. Dehydroquinate synthase family. In the 2nd section; belongs to the EPSP synthase family. It in the 3rd section; belongs to the shikimate kinase family. This sequence in the 4th section; belongs to the type-I 3-dehydroquinase family. The protein in the C-terminal section; belongs to the shikimate dehydrogenase family. As to quaternary structure, homodimer. Zn(2+) serves as cofactor.

Its subcellular location is the cytoplasm. It carries out the reaction 7-phospho-2-dehydro-3-deoxy-D-arabino-heptonate = 3-dehydroquinate + phosphate. The catalysed reaction is 3-dehydroquinate = 3-dehydroshikimate + H2O. It catalyses the reaction shikimate + NADP(+) = 3-dehydroshikimate + NADPH + H(+). The enzyme catalyses shikimate + ATP = 3-phosphoshikimate + ADP + H(+). It carries out the reaction 3-phosphoshikimate + phosphoenolpyruvate = 5-O-(1-carboxyvinyl)-3-phosphoshikimate + phosphate. The protein operates within metabolic intermediate biosynthesis; chorismate biosynthesis; chorismate from D-erythrose 4-phosphate and phosphoenolpyruvate: step 2/7. It functions in the pathway metabolic intermediate biosynthesis; chorismate biosynthesis; chorismate from D-erythrose 4-phosphate and phosphoenolpyruvate: step 3/7. It participates in metabolic intermediate biosynthesis; chorismate biosynthesis; chorismate from D-erythrose 4-phosphate and phosphoenolpyruvate: step 4/7. Its pathway is metabolic intermediate biosynthesis; chorismate biosynthesis; chorismate from D-erythrose 4-phosphate and phosphoenolpyruvate: step 5/7. The protein operates within metabolic intermediate biosynthesis; chorismate biosynthesis; chorismate from D-erythrose 4-phosphate and phosphoenolpyruvate: step 6/7. In terms of biological role, the AROM polypeptide catalyzes 5 consecutive enzymatic reactions in prechorismate polyaromatic amino acid biosynthesis. This Talaromyces marneffei (strain ATCC 18224 / CBS 334.59 / QM 7333) (Penicillium marneffei) protein is Pentafunctional AROM polypeptide 1.